A 530-amino-acid chain; its full sequence is UDP-glucuronosyltransferase 2B14 (530 aa).

Residues 1-24 (MSVKHVSVLLLLLQLSCCFRTGSC) form the signal peptide. 2 N-linked (GlcNAc...) asparagine glycosylation sites follow: Asn-134 and Asn-316. The helical transmembrane segment at 494–510 (VVGFLVSCAAFLIFLVI) threads the bilayer.

It belongs to the UDP-glycosyltransferase family.

It localises to the microsome membrane. The protein resides in the endoplasmic reticulum membrane. The enzyme catalyses glucuronate acceptor + UDP-alpha-D-glucuronate = acceptor beta-D-glucuronoside + UDP + H(+). Functionally, UDPGT is of major importance in the conjugation and subsequent elimination of potentially toxic xenobiotics and endogenous compounds. This Oryctolagus cuniculus (Rabbit) protein is UDP-glucuronosyltransferase 2B14 (UGT2B14).